The following is a 156-amino-acid chain: CD-NTase/cGAS isopeptidase (156 aa).

Residues 16–156 form the MPN domain; sequence LVVIMGHVVT…LITVFKKIES (141 aa). Glu39 (proton donor/acceptor) is an active-site residue. The Zn(2+) site is built by His101, His103, and Asp114. The JAMM motif motif lies at 101-114; the sequence is HTHPEDRPFPSATD.

Belongs to the peptidase M67B family. Cap3 isopeptidase subfamily. Requires Zn(2+) as cofactor.

Its activity is regulated as follows. Cleavage of conjugated proteins is inhibited by EDTA. Functionally, metalloprotease priming reversal component of a CBASS system. CBASS (cyclic oligonucleotide-based antiphage signaling system) provides immunity against bacteriophages. The CD-NTase protein (DncV) synthesizes cyclic nucleotides in response to infection; these serve as specific second messenger signals. The signals activate a diverse range of effectors, leading to bacterial cell death and thus abortive phage infection. A type II-A(GA) CBASS system. Its function is as follows. Reverses the primed state of DncV, the CD-NTase. Cleaves a DncV-GFP (green fluorescent protein) fusion protein precisely at the C-terminus of DncV. Overexpression decreases the efficacy of CBASS protection against phages T2, T4, T5 and T6, blocks formation of DncV-conjugates in vivo, and inhibits in vivo activation of DncV. Antagonism of phage defense upon overexpression is CBASS-system specific, Cap3 from this bacteria only antagonizes its cognate CBASS system and not that of C.freundii, E.coli or E.hormaechei. In terms of biological role, protects E.coli against phage infection. When the CBASS operon (capV-dncV-cap2-cap3) is introduced in E.coli MG1655 there is about 100-fold protection against phages P1 and T2. When the operon is introduced in E.coli MG1655 there is a more than 10(3) decrease in the efficiency of T2 plaque formation. Protects 100-fold against phage T5, offers no protection against T7. When the operon is introduced in E.coli MG1655 it protects against phages T2, T4, T5 and T6. Another paper shows the operon confers protection against phages P1, T2, T5 and T6 but not T4 or lambda. This Vibrio cholerae serotype O1 (strain ATCC 39315 / El Tor Inaba N16961) protein is CD-NTase/cGAS isopeptidase.